The primary structure comprises 554 residues: Chaperonin GroEL (554 aa).

Residues 30 to 33 (TLGP), lysine 51, 87 to 91 (DGTTT), glycine 415, 478 to 480 (DAA), and aspartate 494 contribute to the ATP site.

This sequence belongs to the chaperonin (HSP60) family. Forms a cylinder of 14 subunits composed of two heptameric rings stacked back-to-back. Interacts with the co-chaperonin GroES.

The protein localises to the cytoplasm. The enzyme catalyses ATP + H2O + a folded polypeptide = ADP + phosphate + an unfolded polypeptide.. Functionally, together with its co-chaperonin GroES, plays an essential role in assisting protein folding. The GroEL-GroES system forms a nano-cage that allows encapsulation of the non-native substrate proteins and provides a physical environment optimized to promote and accelerate protein folding. This is Chaperonin GroEL from Pelobacter propionicus (strain DSM 2379 / NBRC 103807 / OttBd1).